The following is a 446-amino-acid chain: MTYKPTVAAGRNVVVVGTQWGDEGKGKLVDWLTEMSQGVVRFQGGHNAGHTLVINGIKTALHLIPSGIMRPGVKCYIGNGVVLSAAKLFEEIEGLEKAGVEVRSRLRISEACPLILPFHAALDIAREAYREKGGTARIGTTGRGIGPAYEDKIARRALRVQDLKYPERFAAKLRELLDLHNFVLTGYLHAPAIDFDTVYAEAMRHAELLKPMMADVSRELNDANREGANLLFEGAQGTLLDVDHGTYPYVTSSNCVAGNAAAGAGVGPGMLHYILGITKAYCTRVGGGPFPTELDWETPDTVGYHLSTVGAEKGVTTGRSRRCGWFDAALLKRSAQVNGLSGLCITKLDVLDGIAELKLCTGYELDGHITDILPMGAEDIERCKPIYETLPGWSQSTVGVTQYDQLPAAAQKYLHRIEEVTGVPIDMISTSPDRDHTILLRNPYAA.

GTP-binding positions include 21–27 (GDEGKGK) and 49–51 (GHT). The active-site Proton acceptor is the Asp22. Residues Asp22 and Gly49 each coordinate Mg(2+). IMP-binding positions include 22–25 (DEGK), 47–50 (NAGH), Thr141, Arg155, Gln236, Thr251, and Arg319. His50 (proton donor) is an active-site residue. 315 to 321 (VTTGRSR) provides a ligand contact to substrate. Residues Arg321, 347 to 349 (KLD), and 429 to 431 (STS) each bind GTP.

This sequence belongs to the adenylosuccinate synthetase family. As to quaternary structure, homodimer. Requires Mg(2+) as cofactor.

Its subcellular location is the cytoplasm. It catalyses the reaction IMP + L-aspartate + GTP = N(6)-(1,2-dicarboxyethyl)-AMP + GDP + phosphate + 2 H(+). It participates in purine metabolism; AMP biosynthesis via de novo pathway; AMP from IMP: step 1/2. Functionally, plays an important role in the de novo pathway of purine nucleotide biosynthesis. Catalyzes the first committed step in the biosynthesis of AMP from IMP. The protein is Adenylosuccinate synthetase of Polaromonas sp. (strain JS666 / ATCC BAA-500).